Consider the following 438-residue polypeptide: MPEQVTDQENQAPQQQTTAVHAYNPEVLQDMLPVYYRRLFPHLPFYRWLSYGSSEDAIFSNREISFTLQDDIYIRYLCFDTQAELEKEICSRNPIKIDIGPVMHSKPKNHRSIPGGLTPVQRELVFDIDMTDYDEVRTCCSGAGVCLKCWKFMVLAARVLDVALREDFGFEHIIWIFSGRRGIHCWVCDYQARHLDGRGRYAVAEYLNIITYASFAGGNSPRCSMGDRPHHSLKRALKIVEPMFEEIVLEDQNLFGTPKGVTKLLNMVHDDAARGELESYMQKNLEDGAHSRLVWESFIKYANSMRTSTTSAWSRKLKNIVAEIQLGLLYPRLDINVTRGFNHLLKAPFCIHPATGKVCVPFSVSAVAKFDPTTVPTITQLLHEINAFDDKSKSYMEAPEDKSRIKDHKKTSMFKGVVVFEEFLRKLERSQKSASLQF.

Active-site residues include glutamate 63, aspartate 127, and aspartate 129. The Zinc knuckle motif motif lies at 139 to 149 (CCSGAGVCLKC).

Belongs to the eukaryotic-type primase small subunit family. In terms of assembly, heterodimer of a catalytic subunit Prim1 and a regulatory subunit Prim2, also known as the DNA primase complex. Component of the alpha DNA polymerase complex (also known as the alpha DNA polymerase-primase complex) consisting of four subunits: the catalytic subunit PolA1, the regulatory subunit PolA2, and the primase complex subunits Prim1 and Prim2 respectively. PolA1 associates with the DNA primase complex before association with PolA2. It depends on Mg(2+) as a cofactor. Mn(2+) is required as a cofactor. As to expression, expressed in embryos (at protein level).

The presence of the regulatory subunit Prim2 accelerates the kinetics of initiation and primer extension. In terms of biological role, catalytic subunit of the DNA primase complex and component of the DNA polymerase alpha complex (also known as the alpha DNA polymerase-primase complex) which play an essential role in the initiation of DNA synthesis. During the S phase of the cell cycle, the DNA polymerase alpha complex (composed of a catalytic subunit PolA1, an accessory subunit PolA2 and two primase subunits, the catalytic subunit Prim1 and the regulatory subunit Prim2) is recruited to DNA at the replicative forks. The primase subunit of the polymerase alpha complex initiates DNA synthesis by oligomerising short RNA primers on both leading and lagging strands. These primers are initially extended by the polymerase alpha catalytic subunit and subsequently transferred to polymerase delta and polymerase epsilon for processive synthesis on the lagging and leading strand, respectively. In the primase complex, both subunits are necessary for the initial di-nucleotide formation, but the extension of the primer depends only on the catalytic subunit. Can add both ribo- and deoxynucleotides during elongation of the primers. Binds single stranded DNA. This Drosophila melanogaster (Fruit fly) protein is DNA primase small subunit.